We begin with the raw amino-acid sequence, 90 residues long: DNA-directed RNA polymerase subunit omega (90 aa).

The segment at 69–90 (RQEQQEQDAAELAAVSSITHNR) is disordered.

It belongs to the RNA polymerase subunit omega family. The RNAP catalytic core consists of 2 alpha, 1 beta, 1 beta' and 1 omega subunit. When a sigma factor is associated with the core the holoenzyme is formed, which can initiate transcription.

The catalysed reaction is RNA(n) + a ribonucleoside 5'-triphosphate = RNA(n+1) + diphosphate. Its function is as follows. Promotes RNA polymerase assembly. Latches the N- and C-terminal regions of the beta' subunit thereby facilitating its interaction with the beta and alpha subunits. This Aliivibrio fischeri (strain ATCC 700601 / ES114) (Vibrio fischeri) protein is DNA-directed RNA polymerase subunit omega.